The following is a 210-amino-acid chain: Ribosomal RNA small subunit methyltransferase G (210 aa).

S-adenosyl-L-methionine contacts are provided by residues Gly-77, Phe-82, 100–102, 128–129, and Arg-141; these read ERS and VE.

The protein belongs to the methyltransferase superfamily. RNA methyltransferase RsmG family.

It localises to the cytoplasm. Functionally, specifically methylates the N7 position of a guanine in 16S rRNA. This chain is Ribosomal RNA small subunit methyltransferase G, found in Borrelia duttonii (strain Ly).